The following is a 523-amino-acid chain: Probable lipid II flippase MurJ (523 aa).

The next 12 membrane-spanning stretches (helical) occupy residues 98 to 118 (AFYSLLLVFLGVLTLLGIVYV), 146 to 166 (IMFGFVFFVCTYAFYMGILNA), 170 to 190 (FGLPALAPALLNVSMLVFTFM), 201 to 221 (GLAWGVLIGGLLQALLLAVAL), 246 to 266 (MLPGLIGMGLLQFSTLVNLYF), 284 to 304 (LLELPLSLISVSIGAALLPTL), 328 to 348 (LFLAWPAALGLYILAEPIIEV), 360 to 380 (VQMTAAILRIYAVSLLLVSCS), 395 to 415 (VPMVLALVSLAVHVSLAPVLM), 422 to 442 (GLMISGVVAALINAVLLMGLL), 461 to 481 (FVLAGAGMVISLQAYELLMAQ), and 489 to 509 (LALFVTILLAVVAYFGLAYVL).

This sequence belongs to the MurJ/MviN family.

It localises to the cell inner membrane. The protein operates within cell wall biogenesis; peptidoglycan biosynthesis. Functionally, involved in peptidoglycan biosynthesis. Transports lipid-linked peptidoglycan precursors from the inner to the outer leaflet of the cytoplasmic membrane. This is Probable lipid II flippase MurJ from Bdellovibrio bacteriovorus (strain ATCC 15356 / DSM 50701 / NCIMB 9529 / HD100).